The sequence spans 364 residues: Histidinol-phosphate aminotransferase 1 (364 aa).

At lysine 211 the chain carries N6-(pyridoxal phosphate)lysine.

Belongs to the class-II pyridoxal-phosphate-dependent aminotransferase family. Histidinol-phosphate aminotransferase subfamily. As to quaternary structure, homodimer. Requires pyridoxal 5'-phosphate as cofactor.

The enzyme catalyses L-histidinol phosphate + 2-oxoglutarate = 3-(imidazol-4-yl)-2-oxopropyl phosphate + L-glutamate. It participates in amino-acid biosynthesis; L-histidine biosynthesis; L-histidine from 5-phospho-alpha-D-ribose 1-diphosphate: step 7/9. This is Histidinol-phosphate aminotransferase 1 from Legionella pneumophila (strain Lens).